Here is a 503-residue protein sequence, read N- to C-terminus: ATP synthase subunit alpha (503 aa).

ATP is bound at residue 170-177 (GDRQTGKT).

The protein belongs to the ATPase alpha/beta chains family. In terms of assembly, F-type ATPases have 2 components, CF(1) - the catalytic core - and CF(0) - the membrane proton channel. CF(1) has five subunits: alpha(3), beta(3), gamma(1), delta(1), epsilon(1). CF(0) has three main subunits: a(1), b(2) and c(9-12). The alpha and beta chains form an alternating ring which encloses part of the gamma chain. CF(1) is attached to CF(0) by a central stalk formed by the gamma and epsilon chains, while a peripheral stalk is formed by the delta and b chains.

It is found in the cell inner membrane. The enzyme catalyses ATP + H2O + 4 H(+)(in) = ADP + phosphate + 5 H(+)(out). Its function is as follows. Produces ATP from ADP in the presence of a proton gradient across the membrane. The alpha chain is a regulatory subunit. The polypeptide is ATP synthase subunit alpha (Geobacter sulfurreducens (strain ATCC 51573 / DSM 12127 / PCA)).